Consider the following 367-residue polypeptide: Germination protease (367 aa).

A propeptide spanning residues 1–15 is cleaved from the precursor; the sequence is MKEPLDLSKYAVRTD.

The protein belongs to the peptidase A25 family. Homotetramer. Autoproteolytically processed. The inactive tetrameric zymogen termed p46 autoprocesses to a smaller form termed p41, which is active only during spore germination.

It catalyses the reaction Endopeptidase action with P4 Glu or Asp, P1 preferably Glu &gt; Asp, P1' hydrophobic and P2' Ala.. In terms of biological role, initiates the rapid degradation of small, acid-soluble proteins during spore germination. The chain is Germination protease from Bacillus cytotoxicus (strain DSM 22905 / CIP 110041 / 391-98 / NVH 391-98).